The sequence spans 298 residues: Protease HtpX homolog (298 aa).

2 helical membrane passes run 15–35 and 38–58; these read LIMVLFVVILTLVGAGLGYLF and SPWTGIIIALAGSLIYLLIMW. Position 143 (histidine 143) interacts with Zn(2+). Glutamate 144 is an active-site residue. Position 147 (histidine 147) interacts with Zn(2+). The next 2 helical transmembrane spans lie at 153 to 173 and 197 to 217; these read ILLSTIGVVLVGVISFISGIA and IIFKVIAIVFVLILGPISASL. Residue glutamate 227 participates in Zn(2+) binding.

Belongs to the peptidase M48B family. It depends on Zn(2+) as a cofactor.

The protein localises to the cell membrane. The polypeptide is Protease HtpX homolog (Lactobacillus acidophilus (strain ATCC 700396 / NCK56 / N2 / NCFM)).